A 297-amino-acid chain; its full sequence is 4-hydroxy-tetrahydrodipicolinate synthase (297 aa).

Thr50 lines the pyruvate pocket. Catalysis depends on Tyr138, which acts as the Proton donor/acceptor. Residue Lys166 is the Schiff-base intermediate with substrate of the active site. Ile208 lines the pyruvate pocket.

It belongs to the DapA family. In terms of assembly, homotetramer; dimer of dimers.

The protein localises to the cytoplasm. The enzyme catalyses L-aspartate 4-semialdehyde + pyruvate = (2S,4S)-4-hydroxy-2,3,4,5-tetrahydrodipicolinate + H2O + H(+). The protein operates within amino-acid biosynthesis; L-lysine biosynthesis via DAP pathway; (S)-tetrahydrodipicolinate from L-aspartate: step 3/4. Catalyzes the condensation of (S)-aspartate-beta-semialdehyde [(S)-ASA] and pyruvate to 4-hydroxy-tetrahydrodipicolinate (HTPA). This Desulfotalea psychrophila (strain LSv54 / DSM 12343) protein is 4-hydroxy-tetrahydrodipicolinate synthase.